The following is an 864-amino-acid chain: Probable beta-glucosidase J (864 aa).

Asp233 is an active-site residue. One can recognise a PA14 domain in the interval 411 to 578 (TGEPGYTFRV…DTDAAIQQAV (168 aa)). 3 N-linked (GlcNAc...) asparagine glycosylation sites follow: Asn434, Asn447, and Asn503.

Belongs to the glycosyl hydrolase 3 family.

The protein localises to the secreted. The enzyme catalyses Hydrolysis of terminal, non-reducing beta-D-glucosyl residues with release of beta-D-glucose.. Its pathway is glycan metabolism; cellulose degradation. Functionally, beta-glucosidases are one of a number of cellulolytic enzymes involved in the degradation of cellulosic biomass. Catalyzes the last step releasing glucose from the inhibitory cellobiose. The polypeptide is Probable beta-glucosidase J (bglJ) (Neosartorya fischeri (strain ATCC 1020 / DSM 3700 / CBS 544.65 / FGSC A1164 / JCM 1740 / NRRL 181 / WB 181) (Aspergillus fischerianus)).